The primary structure comprises 488 residues: Glutamyl-tRNA(Gln) amidotransferase subunit A (488 aa).

Catalysis depends on charge relay system residues K77 and S152. S176 functions as the Acyl-ester intermediate in the catalytic mechanism.

Belongs to the amidase family. GatA subfamily. In terms of assembly, heterotrimer of A, B and C subunits.

The enzyme catalyses L-glutamyl-tRNA(Gln) + L-glutamine + ATP + H2O = L-glutaminyl-tRNA(Gln) + L-glutamate + ADP + phosphate + H(+). Its function is as follows. Allows the formation of correctly charged Gln-tRNA(Gln) through the transamidation of misacylated Glu-tRNA(Gln) in organisms which lack glutaminyl-tRNA synthetase. The reaction takes place in the presence of glutamine and ATP through an activated gamma-phospho-Glu-tRNA(Gln). This Streptococcus pneumoniae serotype 19F (strain G54) protein is Glutamyl-tRNA(Gln) amidotransferase subunit A.